We begin with the raw amino-acid sequence, 400 residues long: Probable phospho-2-dehydro-3-deoxyheptonate aldolase (400 aa).

This sequence belongs to the class-II DAHP synthase family.

It catalyses the reaction D-erythrose 4-phosphate + phosphoenolpyruvate + H2O = 7-phospho-2-dehydro-3-deoxy-D-arabino-heptonate + phosphate. It participates in antibiotic biosynthesis; phenazine biosynthesis. The protein is Probable phospho-2-dehydro-3-deoxyheptonate aldolase (phzC) of Pseudomonas fluorescens.